Reading from the N-terminus, the 455-residue chain is tRNA-2-methylthio-N(6)-dimethylallyladenosine synthase (455 aa).

The 115-residue stretch at lysine 3 to arginine 117 folds into the MTTase N-terminal domain. Residues cysteine 12, cysteine 48, cysteine 80, cysteine 155, cysteine 159, and cysteine 162 each contribute to the [4Fe-4S] cluster site. A Radical SAM core domain is found at valine 141–lysine 375.

This sequence belongs to the methylthiotransferase family. MiaB subfamily. In terms of assembly, monomer. [4Fe-4S] cluster is required as a cofactor.

The protein localises to the cytoplasm. The enzyme catalyses N(6)-dimethylallyladenosine(37) in tRNA + (sulfur carrier)-SH + AH2 + 2 S-adenosyl-L-methionine = 2-methylsulfanyl-N(6)-dimethylallyladenosine(37) in tRNA + (sulfur carrier)-H + 5'-deoxyadenosine + L-methionine + A + S-adenosyl-L-homocysteine + 2 H(+). In terms of biological role, catalyzes the methylthiolation of N6-(dimethylallyl)adenosine (i(6)A), leading to the formation of 2-methylthio-N6-(dimethylallyl)adenosine (ms(2)i(6)A) at position 37 in tRNAs that read codons beginning with uridine. This chain is tRNA-2-methylthio-N(6)-dimethylallyladenosine synthase, found in Anaplasma marginale (strain St. Maries).